Consider the following 301-residue polypeptide: Oxygen-dependent coproporphyrinogen-III oxidase (301 aa).

S90 provides a ligand contact to substrate. The a divalent metal cation site is built by H94 and H104. Catalysis depends on H104, which acts as the Proton donor. 106 to 108 provides a ligand contact to substrate; the sequence is NVR. H143 and H173 together coordinate a divalent metal cation. Residues 238-273 are important for dimerization; that stretch reads YVEFNLVWDRGTLFGLQSGGRTESILMSLPPVVKWR. Residue 256-258 participates in substrate binding; it reads GGR.

This sequence belongs to the aerobic coproporphyrinogen-III oxidase family. Homodimer. A divalent metal cation is required as a cofactor.

Its subcellular location is the cytoplasm. It carries out the reaction coproporphyrinogen III + O2 + 2 H(+) = protoporphyrinogen IX + 2 CO2 + 2 H2O. The protein operates within porphyrin-containing compound metabolism; protoporphyrin-IX biosynthesis; protoporphyrinogen-IX from coproporphyrinogen-III (O2 route): step 1/1. Involved in the heme biosynthesis. Catalyzes the aerobic oxidative decarboxylation of propionate groups of rings A and B of coproporphyrinogen-III to yield the vinyl groups in protoporphyrinogen-IX. The sequence is that of Oxygen-dependent coproporphyrinogen-III oxidase from Nitrosomonas europaea (strain ATCC 19718 / CIP 103999 / KCTC 2705 / NBRC 14298).